We begin with the raw amino-acid sequence, 501 residues long: DEEITCQENLPFTCGNTDALNSSSFSSDFIFGVASSAYQIEGTIGRGLNIWDGFTHRYPNKSGPDHGNGDTTCDSFSYWQKDIDVLDELNATGYRFSIAWSRIIPRGKRSRGVNEKGIDYYHGLISGLIKKGITPFVTLFHWDLPQTLQDEYEGFLDPQIIDDFKDYADLCFEEFGDSVKYWLTINQLYSVPTRGYGSALDAPGRCSPTVDPSCYAGNSSTEPYIVAHHQLLAHAKVVDLYRKNYTHQGGKIGPTMITRWFLPYNDTDRHSIAATERMKEFFLGWFMGPLTNGTYPQIMIDTVGERLPSFSPEESNLVKGSYDFLGLNYYFTQYAQPSPNPVNSTNHTAMMDAGAKLTYINASGHYIGPLFEKDKADSTDNIYYYPKGIYSVMDYFKNKYYNPLIYVTENGISTPGDENRNQSMLDYTRIDYLCSHLCFLNKVIKEKDVNVKGYLAWALGDNYEFNKGFTVRFGLSYIDWNNVTDRDLKKSGQWYQSFISP.

Disulfide bonds link C6/C438, C14/C434, and C206/C214. N21 is a glycosylation site (N-linked (GlcNAc...) asparagine). Substrate is bound at residue Q39. H56 lines the Zn(2+) pocket. N60 carries an N-linked (GlcNAc...) asparagine glycan. D70 contributes to the Zn(2+) binding site. The N-linked (GlcNAc...) asparagine glycan is linked to N90. Substrate-binding residues include H141 and N186. Q187 lines the L-ascorbate pocket. N-linked (GlcNAc...) asparagine glycans are attached at residues N218 and N244. R259 contributes to the L-ascorbate binding site. 2 N-linked (GlcNAc...) asparagine glycosylation sites follow: N265 and N292. Y330 contributes to the substrate binding site. 3 N-linked (GlcNAc...) asparagine glycosylation sites follow: N343, N346, and N361. The Nucleophile role is filled by E409. Substrate contacts are provided by residues W457 and 464-465 (EF). Residue N482 is glycosylated (N-linked (GlcNAc...) asparagine).

The protein belongs to the glycosyl hydrolase 1 family. In terms of assembly, homodimer. As to expression, in vacuoles called myrosin grains of a certain class of cells, myrosin cells, distributed in the cotyledons and the axis of the embryo as well as in different organs of the growing plant.

It is found in the vacuole. The enzyme catalyses a thioglucoside + H2O = a sugar + a thiol.. Functionally, degradation of glucosinolates (glucose residue linked by a thioglucoside bound to an amino acid derivative) to glucose, sulfate and any of the products: thiocyanates, isothiocyanates, nitriles, epithionitriles or oxazolidine-2-thiones. The chain is Myrosinase MA1 from Sinapis alba (White mustard).